The following is a 320-amino-acid chain: Cytochrome f (320 aa).

Residues Met-1–Ala-35 form the signal peptide. 4 residues coordinate heme: Tyr-36, Cys-56, Cys-59, and His-60. A helical transmembrane segment spans residues Val-286–Lys-306.

Belongs to the cytochrome f family. The 4 large subunits of the cytochrome b6-f complex are cytochrome b6, subunit IV (17 kDa polypeptide, petD), cytochrome f and the Rieske protein, while the 4 small subunits are PetG, PetL, PetM and PetN. The complex functions as a dimer. The cofactor is heme.

Its subcellular location is the plastid. It localises to the chloroplast thylakoid membrane. In terms of biological role, component of the cytochrome b6-f complex, which mediates electron transfer between photosystem II (PSII) and photosystem I (PSI), cyclic electron flow around PSI, and state transitions. The sequence is that of Cytochrome f from Ceratophyllum demersum (Rigid hornwort).